Reading from the N-terminus, the 510-residue chain is NAD(P)H-quinone oxidoreductase subunit 2, chloroplastic (510 aa).

Transmembrane regions (helical) follow at residues L24–L44, W59–W79, I99–I119, M124–C144, L149–Y169, Y183–G203, W295–I315, M323–D343, G347–A367, A395–F415, and L418–L438.

It belongs to the complex I subunit 2 family. As to quaternary structure, NDH is composed of at least 16 different subunits, 5 of which are encoded in the nucleus.

The protein localises to the plastid. Its subcellular location is the chloroplast thylakoid membrane. The enzyme catalyses a plastoquinone + NADH + (n+1) H(+)(in) = a plastoquinol + NAD(+) + n H(+)(out). The catalysed reaction is a plastoquinone + NADPH + (n+1) H(+)(in) = a plastoquinol + NADP(+) + n H(+)(out). Its function is as follows. NDH shuttles electrons from NAD(P)H:plastoquinone, via FMN and iron-sulfur (Fe-S) centers, to quinones in the photosynthetic chain and possibly in a chloroplast respiratory chain. The immediate electron acceptor for the enzyme in this species is believed to be plastoquinone. Couples the redox reaction to proton translocation, and thus conserves the redox energy in a proton gradient. In Asparagus officinalis (Garden asparagus), this protein is NAD(P)H-quinone oxidoreductase subunit 2, chloroplastic.